The chain runs to 205 residues: Dephospho-CoA kinase (205 aa).

The DPCK domain maps to 4–203 (KIGITGGIGS…QKIHYLCSAK (200 aa)). Position 12 to 17 (12 to 17 (GSGKSV)) interacts with ATP.

The protein belongs to the CoaE family.

It localises to the cytoplasm. The enzyme catalyses 3'-dephospho-CoA + ATP = ADP + CoA + H(+). It functions in the pathway cofactor biosynthesis; coenzyme A biosynthesis; CoA from (R)-pantothenate: step 5/5. Its function is as follows. Catalyzes the phosphorylation of the 3'-hydroxyl group of dephosphocoenzyme A to form coenzyme A. The chain is Dephospho-CoA kinase from Bacteroides fragilis (strain YCH46).